The sequence spans 506 residues: Arylsulfatase A (506 aa).

A signal peptide spans 1–17 (MALGTLFLALAAGLSTA). 3 residues coordinate Ca(2+): D28, D29, and C68. The active-site Nucleophile is C68. At C68 the chain carries 3-oxoalanine (Cys). Residue K122 coordinates substrate. The active site involves H124. Substrate is bound at residue S149. Disulfide bonds link C155/C171 and C160/C167. N157 carries N-linked (GlcNAc...) asparagine glycosylation. An N-linked (GlcNAc...) asparagine glycan is attached at N183. Residue H228 coordinates substrate. Residues D280 and N281 each contribute to the Ca(2+) site. Cystine bridges form between C299–C413, C487–C499, C488–C501, and C492–C498. K301 serves as a coordination point for substrate. N-linked (GlcNAc...) asparagine glycosylation occurs at N349.

It belongs to the sulfatase family. In terms of assembly, homodimer at neutral pH and homooctamer at acidic pH. Exists both as a single chain of 58 kDa (component A) or as a chain of 50 kDa (component B) linked by disulfide bond(s) to a 7 kDa chain (component C). Interacts with SUMF1. The cofactor is Ca(2+). In terms of processing, the conversion to 3-oxoalanine (also known as C-formylglycine, FGly), of a serine or cysteine residue in prokaryotes and of a cysteine residue in eukaryotes, is critical for catalytic activity. This post-translational modification is severely defective in multiple sulfatase deficiency (MSD).

The protein localises to the endoplasmic reticulum. Its subcellular location is the lysosome. It catalyses the reaction an N-acyl-1-beta-D-(3-O-sulfo)-galactosyl-sphing-4-enine + H2O = a beta-D-galactosyl-(1&lt;-&gt;1')-N-acylsphing-4-enine + sulfate + H(+). Its function is as follows. Hydrolyzes cerebroside sulfate. This is Arylsulfatase A (Arsa) from Mus musculus (Mouse).